Consider the following 358-residue polypeptide: S-adenosylmethionine decarboxylase proenzyme (358 aa).

Active-site residues include Glu-11 and Glu-14. Ser-71 (schiff-base intermediate with substrate; via pyruvic acid) is an active-site residue. Ser-71 is subject to Pyruvic acid (Ser); by autocatalysis. Cys-85 functions as the Proton donor; for catalytic activity in the catalytic mechanism. Catalysis depends on proton acceptor; for processing activity residues Ser-234 and His-247.

The protein belongs to the eukaryotic AdoMetDC family. Pyruvate is required as a cofactor. Is synthesized initially as an inactive proenzyme. Formation of the active enzyme involves a self-maturation process in which the active site pyruvoyl group is generated from an internal serine residue via an autocatalytic post-translational modification. Two non-identical subunits are generated from the proenzyme in this reaction, and the pyruvate is formed at the N-terminus of the alpha chain, which is derived from the carboxyl end of the proenzyme. The post-translation cleavage follows an unusual pathway, termed non-hydrolytic serinolysis, in which the side chain hydroxyl group of the serine supplies its oxygen atom to form the C-terminus of the beta chain, while the remainder of the serine residue undergoes an oxidative deamination to produce ammonia and the pyruvoyl group blocking the N-terminus of the alpha chain.

The catalysed reaction is S-adenosyl-L-methionine + H(+) = S-adenosyl 3-(methylsulfanyl)propylamine + CO2. Its pathway is amine and polyamine biosynthesis; S-adenosylmethioninamine biosynthesis; S-adenosylmethioninamine from S-adenosyl-L-methionine: step 1/1. This chain is S-adenosylmethionine decarboxylase proenzyme (SAMDC), found in Solanum chilense (Tomato).